The chain runs to 295 residues: Histamine N-methyltransferase (295 aa).

The residue at position 2 (Ala2) is a Blocked amino end (Ala). Residue Glu28 participates in substrate binding. S-adenosyl-L-methionine-binding residues include Gly60, Glu89, Gln94, Ser120, and Ile143. Asn284 serves as a coordination point for substrate.

Belongs to the class I-like SAM-binding methyltransferase superfamily. HNMT family. In terms of assembly, monomer.

The protein localises to the cytoplasm. The enzyme catalyses histamine + S-adenosyl-L-methionine = N(tau)-methylhistamine + S-adenosyl-L-homocysteine + H(+). Functionally, inactivates histamine by N-methylation. Plays an important role in degrading histamine and in regulating the airway response to histamine. This Rattus norvegicus (Rat) protein is Histamine N-methyltransferase (Hnmt).